The primary structure comprises 423 residues: 3-phosphoshikimate 1-carboxyvinyltransferase (423 aa).

The 3-phosphoshikimate site is built by lysine 21, serine 22, and arginine 26. Lysine 21 contacts phosphoenolpyruvate. Phosphoenolpyruvate is bound by residues glycine 92 and arginine 120. The 3-phosphoshikimate site is built by serine 166, glutamine 168, serine 194, aspartate 310, and lysine 337. Glutamine 168 serves as a coordination point for phosphoenolpyruvate. The active-site Proton acceptor is the aspartate 310. Phosphoenolpyruvate contacts are provided by arginine 341, arginine 384, and lysine 409.

This sequence belongs to the EPSP synthase family. As to quaternary structure, monomer.

The protein localises to the cytoplasm. It carries out the reaction 3-phosphoshikimate + phosphoenolpyruvate = 5-O-(1-carboxyvinyl)-3-phosphoshikimate + phosphate. It participates in metabolic intermediate biosynthesis; chorismate biosynthesis; chorismate from D-erythrose 4-phosphate and phosphoenolpyruvate: step 6/7. Its function is as follows. Catalyzes the transfer of the enolpyruvyl moiety of phosphoenolpyruvate (PEP) to the 5-hydroxyl of shikimate-3-phosphate (S3P) to produce enolpyruvyl shikimate-3-phosphate and inorganic phosphate. The sequence is that of 3-phosphoshikimate 1-carboxyvinyltransferase from Syntrophobacter fumaroxidans (strain DSM 10017 / MPOB).